Consider the following 120-residue polypeptide: Large ribosomal subunit protein uL18 (120 aa).

It belongs to the universal ribosomal protein uL18 family. Part of the 50S ribosomal subunit; part of the 5S rRNA/L5/L18/L25 subcomplex. Contacts the 5S and 23S rRNAs.

In terms of biological role, this is one of the proteins that bind and probably mediate the attachment of the 5S RNA into the large ribosomal subunit, where it forms part of the central protuberance. The protein is Large ribosomal subunit protein uL18 of Lawsonia intracellularis (strain PHE/MN1-00).